The following is a 134-amino-acid chain: Syncollin (134 aa).

The signal sequence occupies residues 1–21; that stretch reads MSPLCLLLLALALVAVPGARG.

As to quaternary structure, monomer and homooligomer; most probably hexameric. Interacts with GP2. According to PubMed:10753942 interaction with syntaxins shown in PubMed:9244306 is physiologically questionable. Contains intrachain disulfide bonds. As to expression, specifically expressed in pancreas and also detected in secretory granules of parotid gland (at protein level). Expressed in pancreas, spleen, small intestine, lung and neutrophilic granulocytes (at protein level). Expressed by epithelial cells in duodenum and colon.

The protein resides in the zymogen granule membrane. The protein localises to the zymogen granule lumen. Functionally, functions in exocytosis in pancreatic acinar cells regulating the fusion of zymogen granules with each other. May have a pore-forming activity on membranes and regulate exocytosis in other exocrine tissues. This Rattus norvegicus (Rat) protein is Syncollin (Sycn).